Here is a 469-residue protein sequence, read N- to C-terminus: Zinc finger and BTB domain-containing protein 8A.1-B (469 aa).

Positions 24-92 (CDCHIIVEGQ…VYSGKLPLSG (69 aa)) constitute a BTB domain. C2H2-type zinc fingers lie at residues 315 to 337 (FKCP…LRCH) and 343 to 366 (YPCE…QTIH).

The protein localises to the nucleus. May be involved in transcriptional regulation. The polypeptide is Zinc finger and BTB domain-containing protein 8A.1-B (zbtb8a.1-b) (Xenopus laevis (African clawed frog)).